Here is a 191-residue protein sequence, read N- to C-terminus: Potassium-transporting ATPase KdpC subunit (191 aa).

A helical transmembrane segment spans residues 13–35 (VLFTGLCGLAYPLAITGVAQAVL). Positions 112-132 (SGPVPADAVTSSASGLDPDIS) are disordered.

It belongs to the KdpC family. The system is composed of three essential subunits: KdpA, KdpB and KdpC.

The protein localises to the cell inner membrane. Functionally, part of the high-affinity ATP-driven potassium transport (or Kdp) system, which catalyzes the hydrolysis of ATP coupled with the electrogenic transport of potassium into the cytoplasm. This subunit acts as a catalytic chaperone that increases the ATP-binding affinity of the ATP-hydrolyzing subunit KdpB by the formation of a transient KdpB/KdpC/ATP ternary complex. This chain is Potassium-transporting ATPase KdpC subunit, found in Allorhizobium ampelinum (strain ATCC BAA-846 / DSM 112012 / S4) (Agrobacterium vitis (strain S4)).